The following is a 499-amino-acid chain: Glutamyl-tRNA(Gln) amidotransferase subunit A, mitochondrial (499 aa).

Catalysis depends on charge relay system residues K61 and S139. S163 acts as the Acyl-ester intermediate in catalysis.

This sequence belongs to the amidase family. GatA subfamily. In terms of assembly, subunit of the heterotrimeric GatCAB amidotransferase (AdT) complex, composed of A, B and C subunits.

The protein localises to the mitochondrion. The enzyme catalyses L-glutamyl-tRNA(Gln) + L-glutamine + ATP + H2O = L-glutaminyl-tRNA(Gln) + L-glutamate + ADP + phosphate + H(+). Its function is as follows. Allows the formation of correctly charged Gln-tRNA(Gln) through the transamidation of misacylated Glu-tRNA(Gln) in the mitochondria. The reaction takes place in the presence of glutamine and ATP through an activated gamma-phospho-Glu-tRNA(Gln). The chain is Glutamyl-tRNA(Gln) amidotransferase subunit A, mitochondrial from Coccidioides posadasii (strain C735) (Valley fever fungus).